The chain runs to 450 residues: tRNA modification GTPase MnmE (450 aa).

The (6S)-5-formyl-5,6,7,8-tetrahydrofolate site is built by R23, E79, and K118. One can recognise a TrmE-type G domain in the interval 214–374; sequence GITLILVGKP…LKEHILNKVG (161 aa). N224 contacts K(+). GTP-binding positions include 224–229, 243–249, and 268–271; these read NAGKSS, TSIAGTT, and DTAG. S228 is a binding site for Mg(2+). K(+) is bound by residues T243, I245, and T248. T249 is a Mg(2+) binding site. K450 provides a ligand contact to (6S)-5-formyl-5,6,7,8-tetrahydrofolate.

The protein belongs to the TRAFAC class TrmE-Era-EngA-EngB-Septin-like GTPase superfamily. TrmE GTPase family. In terms of assembly, homodimer. Heterotetramer of two MnmE and two MnmG subunits. The cofactor is K(+).

It is found in the cytoplasm. In terms of biological role, exhibits a very high intrinsic GTPase hydrolysis rate. Involved in the addition of a carboxymethylaminomethyl (cmnm) group at the wobble position (U34) of certain tRNAs, forming tRNA-cmnm(5)s(2)U34. The sequence is that of tRNA modification GTPase MnmE from Francisella tularensis subsp. novicida (strain U112).